The chain runs to 413 residues: Argininosuccinate synthase (413 aa).

Residues 12 to 20 (AYSGGLDTS) and alanine 39 contribute to the ATP site. L-citrulline contacts are provided by tyrosine 92 and serine 97. Residue glycine 122 coordinates ATP. Threonine 124, asparagine 128, and aspartate 129 together coordinate L-aspartate. Asparagine 128 contacts L-citrulline. Residues arginine 132, serine 189, serine 198, glutamate 274, and tyrosine 286 each contribute to the L-citrulline site.

This sequence belongs to the argininosuccinate synthase family. Type 1 subfamily. As to quaternary structure, homotetramer.

The protein localises to the cytoplasm. It catalyses the reaction L-citrulline + L-aspartate + ATP = 2-(N(omega)-L-arginino)succinate + AMP + diphosphate + H(+). Its pathway is amino-acid biosynthesis; L-arginine biosynthesis; L-arginine from L-ornithine and carbamoyl phosphate: step 2/3. The protein is Argininosuccinate synthase of Aliarcobacter butzleri (strain RM4018) (Arcobacter butzleri).